We begin with the raw amino-acid sequence, 207 residues long: METNNKLKILKTGTTTVGIKVKDGVVLAADRRASAGMYVAHKYVRKVLYVAPNIGITTAGSVADLQFIYDLLKNIYHYNLITGMRPITIKALATYLANMLSFSKYLPYIVQILIGGVDEQPRLYNLDYVGDITEEDYTATGSGSVEAIGVIEDEYRPDMTLDEAADLARRAIFSSIKRDPYTGTGVIVSKITKNGHEEKEYYPQRKI.

Residues 1 to 13 (METNNKLKILKTG) constitute a propeptide, removed in mature form; by autocatalysis. The active-site Nucleophile is T14.

The protein belongs to the peptidase T1B family. As to quaternary structure, the 20S proteasome core is composed of 14 alpha and 14 beta subunits that assemble into four stacked heptameric rings, resulting in a barrel-shaped structure. The two inner rings, each composed of seven catalytic beta subunits, are sandwiched by two outer rings, each composed of seven alpha subunits. The catalytic chamber with the active sites is on the inside of the barrel. Has a gated structure, the ends of the cylinder being occluded by the N-termini of the alpha-subunits. Is capped at one or both ends by the proteasome regulatory ATPase, PAN.

It is found in the cytoplasm. It catalyses the reaction Cleavage of peptide bonds with very broad specificity.. With respect to regulation, the formation of the proteasomal ATPase PAN-20S proteasome complex, via the docking of the C-termini of PAN into the intersubunit pockets in the alpha-rings, triggers opening of the gate for substrate entry. Interconversion between the open-gate and close-gate conformations leads to a dynamic regulation of the 20S proteasome proteolysis activity. Its function is as follows. Component of the proteasome core, a large protease complex with broad specificity involved in protein degradation. This chain is Proteasome subunit beta 2, found in Sulfurisphaera tokodaii (strain DSM 16993 / JCM 10545 / NBRC 100140 / 7) (Sulfolobus tokodaii).